The primary structure comprises 250 residues: Hydroxyacylglutathione hydrolase (250 aa).

Residues histidine 52, histidine 54, aspartate 56, histidine 57, histidine 107, aspartate 128, and histidine 166 each coordinate Zn(2+).

The protein belongs to the metallo-beta-lactamase superfamily. Glyoxalase II family. As to quaternary structure, monomer. It depends on Zn(2+) as a cofactor.

It catalyses the reaction an S-(2-hydroxyacyl)glutathione + H2O = a 2-hydroxy carboxylate + glutathione + H(+). It participates in secondary metabolite metabolism; methylglyoxal degradation; (R)-lactate from methylglyoxal: step 2/2. In terms of biological role, thiolesterase that catalyzes the hydrolysis of S-D-lactoyl-glutathione to form glutathione and D-lactic acid. In Neisseria gonorrhoeae (strain NCCP11945), this protein is Hydroxyacylglutathione hydrolase.